We begin with the raw amino-acid sequence, 388 residues long: 4-hydroxy-3-methylbut-2-en-1-yl diphosphate synthase (flavodoxin) (388 aa).

[4Fe-4S] cluster contacts are provided by cysteine 280, cysteine 283, cysteine 315, and glutamate 322. The interval 369 to 388 is disordered; that stretch reads MNSEGGPEATSSGSPVVTVS. The segment covering 377 to 388 has biased composition (polar residues); the sequence is ATSSGSPVVTVS.

Belongs to the IspG family. [4Fe-4S] cluster is required as a cofactor.

The enzyme catalyses (2E)-4-hydroxy-3-methylbut-2-enyl diphosphate + oxidized [flavodoxin] + H2O + 2 H(+) = 2-C-methyl-D-erythritol 2,4-cyclic diphosphate + reduced [flavodoxin]. It participates in isoprenoid biosynthesis; isopentenyl diphosphate biosynthesis via DXP pathway; isopentenyl diphosphate from 1-deoxy-D-xylulose 5-phosphate: step 5/6. Converts 2C-methyl-D-erythritol 2,4-cyclodiphosphate (ME-2,4cPP) into 1-hydroxy-2-methyl-2-(E)-butenyl 4-diphosphate. This chain is 4-hydroxy-3-methylbut-2-en-1-yl diphosphate synthase (flavodoxin), found in Mycolicibacterium paratuberculosis (strain ATCC BAA-968 / K-10) (Mycobacterium paratuberculosis).